The following is a 535-amino-acid chain: T-complex protein 1 subunit zeta (535 aa).

This sequence belongs to the TCP-1 chaperonin family. As to quaternary structure, heterooligomeric complex of about 850 to 900 kDa that forms two stacked rings, 12 to 16 nm in diameter.

The protein localises to the cytoplasm. Molecular chaperone; assists the folding of proteins upon ATP hydrolysis. Known to play a role, in vitro, in the folding of actin and tubulin. This is T-complex protein 1 subunit zeta (cct6) from Schizosaccharomyces pombe (strain 972 / ATCC 24843) (Fission yeast).